A 63-amino-acid polypeptide reads, in one-letter code: Keratin-associated protein 19-7 (63 aa).

This sequence belongs to the KRTAP type 19 family. As to quaternary structure, interacts with hair keratins.

In the hair cortex, hair keratin intermediate filaments are embedded in an interfilamentous matrix, consisting of hair keratin-associated proteins (KRTAP), which are essential for the formation of a rigid and resistant hair shaft through their extensive disulfide bond cross-linking with abundant cysteine residues of hair keratins. The matrix proteins include the high-sulfur and high-glycine-tyrosine keratins. The sequence is that of Keratin-associated protein 19-7 (KRTAP19-7) from Homo sapiens (Human).